The sequence spans 377 residues: Queuine tRNA-ribosyltransferase (377 aa).

D89 functions as the Proton acceptor in the catalytic mechanism. Substrate contacts are provided by residues 89–93, D143, Q187, and G214; that span reads DSGGF. The segment at 245 to 251 is RNA binding; sequence GVGKPED. D264 serves as the catalytic Nucleophile. The interval 269 to 273 is RNA binding; important for wobble base 34 recognition; it reads TRNAR. Residues C302, C304, C307, and H333 each coordinate Zn(2+).

Belongs to the queuine tRNA-ribosyltransferase family. In terms of assembly, homodimer. Within each dimer, one monomer is responsible for RNA recognition and catalysis, while the other monomer binds to the replacement base PreQ1. The cofactor is Zn(2+).

The catalysed reaction is 7-aminomethyl-7-carbaguanine + guanosine(34) in tRNA = 7-aminomethyl-7-carbaguanosine(34) in tRNA + guanine. It functions in the pathway tRNA modification; tRNA-queuosine biosynthesis. In terms of biological role, catalyzes the base-exchange of a guanine (G) residue with the queuine precursor 7-aminomethyl-7-deazaguanine (PreQ1) at position 34 (anticodon wobble position) in tRNAs with GU(N) anticodons (tRNA-Asp, -Asn, -His and -Tyr). Catalysis occurs through a double-displacement mechanism. The nucleophile active site attacks the C1' of nucleotide 34 to detach the guanine base from the RNA, forming a covalent enzyme-RNA intermediate. The proton acceptor active site deprotonates the incoming PreQ1, allowing a nucleophilic attack on the C1' of the ribose to form the product. After dissociation, two additional enzymatic reactions on the tRNA convert PreQ1 to queuine (Q), resulting in the hypermodified nucleoside queuosine (7-(((4,5-cis-dihydroxy-2-cyclopenten-1-yl)amino)methyl)-7-deazaguanosine). This is Queuine tRNA-ribosyltransferase from Shewanella piezotolerans (strain WP3 / JCM 13877).